The sequence spans 274 residues: Kit ligand (274 aa).

The N-terminal stretch at 1 to 25 (MKKTQTWIVTCIYLQLLLFNPLVKT) is a signal peptide. Residues 26 to 215 (KGLCRNRVTD…TNPIEDSSIQ (190 aa)) lie on the Extracellular side of the membrane. Disulfide bonds link cysteine 29/cysteine 114 and cysteine 68/cysteine 164. N-linked (GlcNAc...) asparagine glycosylation is found at asparagine 90, asparagine 97, asparagine 145, and asparagine 196. The helical transmembrane segment at 216 to 238 (WAVMALPACFSLVIGFAFGAFYW) threads the bilayer. The Cytoplasmic portion of the chain corresponds to 239–274 (KKKQPNLTRTVENIQINEEDNEISMLQEKEREFQEV).

Belongs to the SCF family. In terms of assembly, homodimer, non-covalently linked. A soluble form is produced by proteolytic processing of isoform 1 in the extracellular domain.

Its subcellular location is the cell membrane. It localises to the secreted. It is found in the cytoplasm. The protein localises to the cytoskeleton. The protein resides in the cell projection. Its subcellular location is the lamellipodium. It localises to the filopodium. Stimulates the proliferation of mast cells. Able to augment the proliferation of both myeloid and lymphoid hematopoietic progenitors in bone marrow culture. Also mediates cell-cell adhesion. Acts synergistically with other cytokines, probably interleukins. The sequence is that of Kit ligand (KITLG) from Felis catus (Cat).